The chain runs to 480 residues: RAC-alpha serine/threonine-protein kinase (480 aa).

The PH domain occupies 5–108; that stretch reads AIVKEGWLHK…WATAIQTVAD (104 aa). Residues Lys-14 and Lys-20 each carry the N6-acetyllysine modification. 14–19 serves as a coordination point for 1D-myo-inositol 1,3,4,5-tetrakisphosphate; it reads KRGEYI. Residues 23–25 and Asn-53 each bind 1D-myo-inositol 1,3,4,5-tetrakisphosphate; that span reads RPR. Cys-60 and Cys-77 are joined by a disulfide. Arg-86 is a 1D-myo-inositol 1,3,4,5-tetrakisphosphate binding site. A disordered region spans residues 114-137; that stretch reads EEETMDFRSGSPSDNSGAEEMEVS. Ser-124 is subject to Phosphoserine. Ser-126 and Ser-129 each carry phosphoserine; alternate. O-linked (GlcNAc) serine; alternate glycosylation is found at Ser-126 and Ser-129. A Protein kinase domain is found at 150-408; sequence FEYLKLLGKG…AKEIMQHRFF (259 aa). 156–164 lines the ATP pocket; the sequence is LGKGTFGKV. Tyr-176 is subject to Phosphotyrosine; by TNK2. Lys-179 is an ATP binding site. Asp-274 serves as the catalytic Proton acceptor. Residue Lys-284 forms a Glycyl lysine isopeptide (Lys-Gly) (interchain with G-Cter in ubiquitin) linkage. Cys-296 and Cys-310 are oxidised to a cystine. Residue Thr-305 is glycosylated (O-linked (GlcNAc) threonine). Thr-308 bears the Phosphothreonine; by IKKE, PDPK1 and TBK1 mark. An O-linked (GlcNAc) threonine glycan is attached at Thr-312. An AGC-kinase C-terminal domain is found at 409–480; the sequence is ANIVWQDVYE…QFSYSASGTA (72 aa). Residue Thr-448 is modified to Phosphothreonine. At Thr-450 the chain carries Phosphothreonine; by MTOR. The interval 450–480 is disordered; that stretch reads TPPDQDDSMECVDSERRPHFPQFSYSASGTA. An O-linked (GlcNAc) serine; alternate glycan is attached at Ser-473. The residue at position 473 (Ser-473) is a Phosphoserine; by IKKE, MTOR, PRKDC and TBK1; alternate. A Phosphotyrosine modification is found at Tyr-474. Ser-477 bears the Phosphoserine; by CDK2 and MTOR mark. Thr-479 carries the post-translational modification Phosphothreonine; by CDK2 and MTOR.

It belongs to the protein kinase superfamily. AGC Ser/Thr protein kinase family. RAC subfamily. In terms of assembly, interacts with and phosphorylated by PDPK1. Interacts with AGAP2 (isoform 2/PIKE-A); the interaction occurs in the presence of guanine nucleotides. Interacts with AKTIP. Interacts (via PH domain) with MTCP1, TCL1A and TCL1B. Interacts with CDKN1B; the interaction phosphorylates CDKN1B promoting 14-3-3 binding and cell-cycle progression. Interacts with MAP3K5 and TRAF6. Interacts with BAD, PPP2R5B, STK3 and STK4. Interacts (via PH domain) with SIRT1. Interacts with SRPK2 in a phosphorylation-dependent manner. Interacts with TRIM13; the interaction ubiquitinates AKT1 leading to its proteasomal degradation. Interacts with RAF1. Interacts (via the C-terminus) with CCDC88A (via its C-terminus) and THEM4 (via its C-terminus). Interacts with GRB10; the interaction leads to GRB10 phosphorylation thus promoting YWHAE-binding. Interacts with KCTD20. Interacts with BTBD10. Interacts with PA2G4. Interacts with KIF14; the interaction is detected in the plasma membrane upon INS stimulation and promotes AKT1 phosphorylation. Interacts with FAM83B; activates the PI3K/AKT signaling cascade. Interacts with WDFY2 (via WD repeats 1-3). Forms a complex with WDFY2 and FOXO1. Interacts with FAM168A. Interacts with SYAP1 (via phosphorylated form and BSD domain); this interaction is enhanced in a mTORC2-mediated manner in response to epidermal growth factor (EGF) stimulation and activates AKT1. Interacts with PKHM3. Interacts with FKBP5/FKBP51; promoting interaction between Akt/AKT1 and PHLPP1, thereby enhancing dephosphorylation and subsequent activation of Akt/AKT1. Interacts with TMEM175; leading to formation of the lysoK(GF) complex. Post-translationally, O-GlcNAcylation at Thr-305 and Thr-312 inhibits activating phosphorylation at Thr-308 via disrupting the interaction between AKT1 and PDPK1. O-GlcNAcylation at Ser-473 also probably interferes with phosphorylation at this site. In terms of processing, phosphorylation on Thr-308, Ser-473 and Tyr-474 is required for full activity. Phosphorylation of the activation loop at Thr-308 by PDPK1/PDK1 is a prerequisite for full activation. Phosphorylation by mTORC2 in response to growth factors plays a key role in AKT1 activation: mTORC2 phosphorylates different sites depending on the context, such as Thr-450, Ser-473, Ser-477 or Thr-479, thereby facilitating subsequent phosphorylation of the activation loop by PDPK1/PDK1. Phosphorylation at Ser-473 by mTORC2 promotes ubiquitination and degradation by the proteasome. Also phosphorylated at Ser-477 and Thr-479 by CDK2, facilitating subsequent phosphorylation of the activation loop by PDPK1/PDK1. Activated TNK2 phosphorylates it on Tyr-176 resulting in its binding to the anionic plasma membrane phospholipid PA. This phosphorylated form localizes to the cell membrane, where it is targeted by PDPK1 and PDPK2 for further phosphorylations on Thr-308 and Ser-473 leading to its activation. Phosphorylated at Thr-308 and Ser-473 by IKBKE and TBK1. Ser-473 phosphorylation is enhanced by interaction with AGAP2 isoform 2 (PIKE-A). Ser-473 phosphorylation is enhanced by signaling through activated FLT3. Ser-473 is dephosphorylated by PHLPP. Dephosphorylated at Thr-308 and Ser-473 by PP2A phosphatase. The phosphorylated form of PPP2R5B is required for bridging AKT1 with PP2A phosphatase. Ser-473 is dephosphorylated by CPPED1, leading to termination of signaling. AIM2 acts as an inhibitor of AKT1 by inhibiting phosphorylation Ser-473: AIM2 acts both by inhibiting the activity of PRKDC/DNA-PK kinase and promoting dephosphorylation by PP2A phosphatase. Ubiquitinated; undergoes both 'Lys-48'- and 'Lys-63'-linked polyubiquitination. TRAF6-induced 'Lys-63'-linked AKT1 ubiquitination is critical for phosphorylation and activation. When ubiquitinated, it translocates to the plasma membrane, where it becomes phosphorylated. When fully phosphorylated and translocated into the nucleus, undergoes 'Lys-48'-polyubiquitination catalyzed by TTC3, leading to its degradation by the proteasome. Also ubiquitinated by TRIM13 leading to its proteasomal degradation. Ubiquitinated via 'Lys-48'-linked polyubiquitination by ZNRF1, leading to its degradation by the proteasome. Phosphorylated, undergoes 'Lys-48'-linked polyubiquitination preferentially at Lys-284 catalyzed by MUL1, leading to its proteasomal degradation. Post-translationally, acetylated on Lys-14 and Lys-20 by the histone acetyltransferases EP300 and KAT2B. Acetylation results in reduced phosphorylation and inhibition of activity. Deacetylated at Lys-14 and Lys-20 by SIRT1. SIRT1-mediated deacetylation relieves the inhibition. In terms of processing, cleavage by caspase-3/CASP3. Cleaved at the caspase-3 consensus site Asp-462 during apoptosis, resulting in down-regulation of the AKT signaling pathway and decreased cell survival. As to expression, widely expressed. Low levels found in liver with slightly higher levels present in thymus and testis.

The protein localises to the cytoplasm. It is found in the nucleus. It localises to the cell membrane. Its subcellular location is the mitochondrion intermembrane space. The enzyme catalyses L-seryl-[protein] + ATP = O-phospho-L-seryl-[protein] + ADP + H(+). It carries out the reaction L-threonyl-[protein] + ATP = O-phospho-L-threonyl-[protein] + ADP + H(+). With respect to regulation, three specific sites, one in the kinase domain (Thr-308) and the two other ones in the C-terminal regulatory region (Ser-473 and Tyr-474), need to be phosphorylated for its full activation. Functionally, AKT1 is one of 3 closely related serine/threonine-protein kinases (AKT1, AKT2 and AKT3) called the AKT kinase, and which regulate many processes including metabolism, proliferation, cell survival, growth and angiogenesis. This is mediated through serine and/or threonine phosphorylation of a range of downstream substrates. Over 100 substrate candidates have been reported so far, but for most of them, no isoform specificity has been reported. AKT is responsible of the regulation of glucose uptake by mediating insulin-induced translocation of the SLC2A4/GLUT4 glucose transporter to the cell surface. Phosphorylation of PTPN1 at 'Ser-50' negatively modulates its phosphatase activity preventing dephosphorylation of the insulin receptor and the attenuation of insulin signaling. Phosphorylation of TBC1D4 triggers the binding of this effector to inhibitory 14-3-3 proteins, which is required for insulin-stimulated glucose transport. AKT also regulates the storage of glucose in the form of glycogen by phosphorylating GSK3A at 'Ser-21' and GSK3B at 'Ser-9', resulting in inhibition of its kinase activity. Phosphorylation of GSK3 isoforms by AKT is also thought to be one mechanism by which cell proliferation is driven. AKT also regulates cell survival via the phosphorylation of MAP3K5 (apoptosis signal-related kinase). Phosphorylation of 'Ser-83' decreases MAP3K5 kinase activity stimulated by oxidative stress and thereby prevents apoptosis. AKT mediates insulin-stimulated protein synthesis by phosphorylating TSC2 at 'Ser-939' and 'Thr-1462', thereby activating the mTORC1 signaling pathway, and leading to both phosphorylation of 4E-BP1 and in activation of RPS6KB1. Also regulates the mTORC1 signaling pathway by catalyzing phosphorylation of CASTOR1 and DEPDC5. AKT plays a role as key modulator of the AKT-mTOR signaling pathway controlling the tempo of the process of newborn neurons integration during adult neurogenesis, including correct neuron positioning, dendritic development and synapse formation. Part of a positive feedback loop of mTORC2 signaling by mediating phosphorylation of MAPKAP1/SIN1, promoting mTORC2 activation. AKT is involved in the phosphorylation of members of the FOXO factors (Forkhead family of transcription factors), leading to binding of 14-3-3 proteins and cytoplasmic localization. In particular, FOXO1 is phosphorylated at 'Thr-24', 'Ser-256' and 'Ser-319'. FOXO3 and FOXO4 are phosphorylated on equivalent sites. AKT has an important role in the regulation of NF-kappa-B-dependent gene transcription and positively regulates the activity of CREB1 (cyclic AMP (cAMP)-response element binding protein). The phosphorylation of CREB1 induces the binding of accessory proteins that are necessary for the transcription of pro-survival genes such as BCL2 and MCL1. AKT phosphorylates 'Ser-454' on ATP citrate lyase (ACLY), thereby potentially regulating ACLY activity and fatty acid synthesis. Activates the 3B isoform of cyclic nucleotide phosphodiesterase (PDE3B) via phosphorylation of 'Ser-273', resulting in reduced cyclic AMP levels and inhibition of lipolysis. Phosphorylates PIKFYVE on 'Ser-318', which results in increased PI(3)P-5 activity. The Rho GTPase-activating protein DLC1 is another substrate and its phosphorylation is implicated in the regulation cell proliferation and cell growth. Signals downstream of phosphatidylinositol 3-kinase (PI(3)K) to mediate the effects of various growth factors such as platelet-derived growth factor (PDGF), epidermal growth factor (EGF), insulin and insulin-like growth factor 1 (IGF1). AKT mediates the antiapoptotic effects of IGF1. Essential for the SPATA13-mediated regulation of cell migration and adhesion assembly and disassembly. May be involved in the regulation of the placental development. Phosphorylates STK4/MST1 at 'Thr-120' and 'Thr-387' leading to inhibition of its: kinase activity, nuclear translocation, autophosphorylation and ability to phosphorylate FOXO3. Phosphorylates STK3/MST2 at 'Thr-117' and 'Thr-384' leading to inhibition of its: cleavage, kinase activity, autophosphorylation at Thr-180, binding to RASSF1 and nuclear translocation. Phosphorylates SRPK2 and enhances its kinase activity towards SRSF2 and ACIN1 and promotes its nuclear translocation. Phosphorylates RAF1 at 'Ser-259' and negatively regulates its activity. Phosphorylation of BAD stimulates its pro-apoptotic activity. Phosphorylates KAT6A at 'Thr-369' and this phosphorylation inhibits the interaction of KAT6A with PML and negatively regulates its acetylation activity towards p53/TP53. Phosphorylates palladin (PALLD), modulating cytoskeletal organization and cell motility. Phosphorylates prohibitin (PHB), playing an important role in cell metabolism and proliferation. Phosphorylates CDKN1A, for which phosphorylation at 'Thr-145' induces its release from CDK2 and cytoplasmic relocalization. These recent findings indicate that the AKT1 isoform has a more specific role in cell motility and proliferation. Phosphorylates CLK2 thereby controlling cell survival to ionizing radiation. Phosphorylates PCK1 at 'Ser-90', reducing the binding affinity of PCK1 to oxaloacetate and changing PCK1 into an atypical protein kinase activity using GTP as donor. Also acts as an activator of TMEM175 potassium channel activity in response to growth factors: forms the lysoK(GF) complex together with TMEM175 and acts by promoting TMEM175 channel activation, independently of its protein kinase activity. Acts as a negative regulator of the cGAS-STING pathway by mediating phosphorylation of CGAS during mitosis, leading to its inhibition. Acts as a regulator of mitochondrial calcium uptake by mediating phosphorylation of MICU1 in the mitochondrial intermembrane space, impairing MICU1 maturation. Acts as an inhibitor of tRNA methylation by mediating phosphorylation of the N-terminus of METTL1, thereby inhibiting METTL1 methyltransferase activity. In response to LPAR1 receptor pathway activation, phosphorylates Rabin8/RAB3IP which alters its activity and phosphorylates WDR44 which induces WDR44 binding to Rab11, thereby switching Rab11 vesicular function from preciliary trafficking to endocytic recycling. The protein is RAC-alpha serine/threonine-protein kinase (Akt1) of Mus musculus (Mouse).